Here is a 323-residue protein sequence, read N- to C-terminus: Ubiquinone biosynthesis protein COQ4, mitochondrial (323 aa).

Residues methionine 1–serine 29 constitute a mitochondrion transit peptide. Zn(2+) is bound by residues histidine 205, aspartate 206, histidine 209, and glutamate 221.

This sequence belongs to the COQ4 family. Component of a multi-subunit COQ enzyme complex, composed of at least COQ3, COQ4, COQ5, COQ6, COQ7 and COQ9. The cofactor is Zn(2+).

Its subcellular location is the mitochondrion inner membrane. It carries out the reaction a 4-hydroxy-3-methoxy-5-(all-trans-polyprenyl)benzoate + H(+) = a 2-methoxy-6-(all-trans-polyprenyl)phenol + CO2. It participates in cofactor biosynthesis; ubiquinone biosynthesis. Functionally, lyase that catalyzes the C1-decarboxylation of 4-hydroxy-3-methoxy-5-(all-trans-polyprenyl)benzoic acid into 2-methoxy-6-(all-trans-polyprenyl)phenol during ubiquinone biosynthesis. This Candida dubliniensis (strain CD36 / ATCC MYA-646 / CBS 7987 / NCPF 3949 / NRRL Y-17841) (Yeast) protein is Ubiquinone biosynthesis protein COQ4, mitochondrial.